An 84-amino-acid polypeptide reads, in one-letter code: Acyl carrier protein (84 aa).

In terms of domain architecture, Carrier spans 4 to 79 (NEIFEKVQDI…EVVDFIKSKL (76 aa)). Residue Ser39 is modified to O-(pantetheine 4'-phosphoryl)serine.

Belongs to the acyl carrier protein (ACP) family. Post-translationally, 4'-phosphopantetheine is transferred from CoA to a specific serine of apo-ACP by AcpS. This modification is essential for activity because fatty acids are bound in thioester linkage to the sulfhydryl of the prosthetic group.

The protein localises to the plastid. Its subcellular location is the chloroplast. It functions in the pathway lipid metabolism; fatty acid biosynthesis. Carrier of the growing fatty acid chain in fatty acid biosynthesis. This Porphyra purpurea (Red seaweed) protein is Acyl carrier protein.